A 206-amino-acid polypeptide reads, in one-letter code: Ribosomal RNA small subunit methyltransferase G (206 aa).

S-adenosyl-L-methionine-binding positions include Gly-73, Leu-78, Val-124–Glu-125, and Arg-139.

It belongs to the methyltransferase superfamily. RNA methyltransferase RsmG family.

The protein localises to the cytoplasm. The catalysed reaction is guanosine(527) in 16S rRNA + S-adenosyl-L-methionine = N(7)-methylguanosine(527) in 16S rRNA + S-adenosyl-L-homocysteine. Functionally, specifically methylates the N7 position of guanine in position 527 of 16S rRNA. This chain is Ribosomal RNA small subunit methyltransferase G, found in Edwardsiella ictaluri (strain 93-146).